The primary structure comprises 430 residues: Glutamate-1-semialdehyde 2,1-aminomutase (430 aa).

K270 carries the post-translational modification N6-(pyridoxal phosphate)lysine.

It belongs to the class-III pyridoxal-phosphate-dependent aminotransferase family. HemL subfamily. As to quaternary structure, homodimer. Pyridoxal 5'-phosphate is required as a cofactor.

The protein resides in the cytoplasm. It carries out the reaction (S)-4-amino-5-oxopentanoate = 5-aminolevulinate. It functions in the pathway porphyrin-containing compound metabolism; protoporphyrin-IX biosynthesis; 5-aminolevulinate from L-glutamyl-tRNA(Glu): step 2/2. This chain is Glutamate-1-semialdehyde 2,1-aminomutase, found in Cupriavidus necator (strain ATCC 17699 / DSM 428 / KCTC 22496 / NCIMB 10442 / H16 / Stanier 337) (Ralstonia eutropha).